Consider the following 407-residue polypeptide: Enolase-binding protein (407 aa).

An N-terminal signal peptide occupies residues 1-24 (MALGNALYPLTATVFLCVVGFATS). Topologically, residues 25–366 (SNENSRFLIN…FGQAYPGFRN (342 aa)) are extracellular. N-linked (GlcNAc...) asparagine glycosylation is found at asparagine 52, asparagine 78, asparagine 161, and asparagine 250. The helical transmembrane segment at 367–387 (VAIGAAILFFSVLGVAIIDMI) threads the bilayer. Residues 388–407 (RRTIANRRAKRLHLGKYSRT) are Cytoplasmic-facing.

In terms of assembly, (Microbial infection) Interacts with ENO/enolase from parasites P.berghei and P.falciparum. Expressed in the female midgut epithelium.

It is found in the cell membrane. Its function is as follows. (Microbial infection) Acts as a receptor for ENO/enolase from parasites P.berghei and P.falciparum. The interaction is involved in the invasion of the mosquito midgut by P.berghei ookinete, but is dispensable for P.falciparum ookinete invasion. The protein is Enolase-binding protein of Anopheles gambiae (African malaria mosquito).